Consider the following 66-residue polypeptide: Surface composition regulator (66 aa).

Belongs to the GlgS family.

In terms of biological role, major determinant of cell surface composition. Negatively regulates motility, adhesion and synthesis of biofilm exopolysaccharides. The chain is Surface composition regulator from Escherichia coli O127:H6 (strain E2348/69 / EPEC).